Here is a 407-residue protein sequence, read N- to C-terminus: E3 ubiquitin-protein ligase TRIM13 (407 aa).

The RING-type zinc-finger motif lies at 10 to 58; it reads CPICCSLFDDPRVLPCSHNFCKKCLEGLLEGNVRNSLWRPSPFKCPTCR. The B box-type zinc-finger motif lies at 89–131; sequence PKMPVCKEHLGQPLNIFCVTDMQLICGVCATRGSHTKHVFSSI. Residues Cys94, His97, Cys117, and His123 each coordinate Zn(2+). Positions 172–200 form a coiled coil; it reads LQLLTKDSDKVKEFFEKLQHTLDQKKNEI. The chain crosses the membrane as a helical span at residues 316-336; it reads LLLMAVVLLGLLVFFGPTVFL.

In terms of assembly, interacts (via C-terminal domain) with VCP. Interacts with AKT1; the interaction ubiquitinates AKT1 and leads to its proteasomal degradation. Interacts with MDM2; the interaction ubiquitinates AKT1 and leads to its proteasomal degradation. Interacts with p62/SQSTM1. Interacts with TRAF6. Interacts with IKBKG/NEMO. In terms of processing, auto-ubiquitinated; requires the RING-type zinc finger. Auto-polyubiquitination leads to proteasomal degradation.

The protein resides in the endoplasmic reticulum membrane. The enzyme catalyses S-ubiquitinyl-[E2 ubiquitin-conjugating enzyme]-L-cysteine + [acceptor protein]-L-lysine = [E2 ubiquitin-conjugating enzyme]-L-cysteine + N(6)-ubiquitinyl-[acceptor protein]-L-lysine.. The protein operates within protein modification; protein ubiquitination. Functionally, endoplasmic reticulum (ER) membrane anchored E3 ligase involved in the retrotranslocation and turnover of membrane and secretory proteins from the ER through a set of processes named ER-associated degradation (ERAD). This process acts on misfolded proteins as well as in the regulated degradation of correctly folded proteins. Enhances ionizing radiation-induced p53/TP53 stability and apoptosis via ubiquitinating MDM2 and AKT1 and decreasing AKT1 kinase activity through MDM2 and AKT1 proteasomal degradation. Regulates ER stress-induced autophagy, and may act as a tumor suppressor. Also plays a role in innate immune response by stimulating NF-kappa-B activity in the TLR2 signaling pathway. Ubiquitinates TRAF6 via the 'Lys-29'-linked polyubiquitination chain resulting in NF-kappa-B activation. Participates as well in T-cell receptor-mediated NF-kappa-B activation. In the presence of TNF, modulates the IKK complex by regulating IKBKG/NEMO ubiquitination leading to the repression of NF-kappa-B. In Rattus norvegicus (Rat), this protein is E3 ubiquitin-protein ligase TRIM13 (Trim13).